A 208-amino-acid polypeptide reads, in one-letter code: Sodium/potassium-transporting ATPase subunit beta-1-interacting protein 4 (208 aa).

4 helical membrane-spanning segments follow: residues 10–30 (LILL…FDFL), 35–55 (APIL…FGTL), 62–82 (VIAY…LICF), and 151–171 (ALQI…TSVF).

Belongs to the NKAIN family. As to quaternary structure, interacts with atp1b1 C-terminus.

The protein localises to the cell membrane. This is Sodium/potassium-transporting ATPase subunit beta-1-interacting protein 4 (nkain4) from Xenopus tropicalis (Western clawed frog).